The primary structure comprises 334 residues: Phospho-N-acetylmuramoyl-pentapeptide-transferase (334 aa).

The next 10 membrane-spanning stretches (helical) occupy residues 11 to 31 (GAGL…IPLM), 55 to 75 (PTMG…IFAP), 84 to 104 (LIIA…DDYI), 124 to 144 (VGLA…GTAV), 158 to 178 (PLYY…VNFA), 184 to 204 (LLGG…ALAL), 205 to 225 (GQTD…GFLH), 233 to 253 (IFMG…LAVL), 258 to 278 (FLLV…ILQV), and 311 to 331 (LFWG…PGML).

The protein belongs to the glycosyltransferase 4 family. MraY subfamily. Mg(2+) is required as a cofactor.

It is found in the cell membrane. The enzyme catalyses UDP-N-acetyl-alpha-D-muramoyl-L-alanyl-gamma-D-glutamyl-meso-2,6-diaminopimeloyl-D-alanyl-D-alanine + di-trans,octa-cis-undecaprenyl phosphate = di-trans,octa-cis-undecaprenyl diphospho-N-acetyl-alpha-D-muramoyl-L-alanyl-D-glutamyl-meso-2,6-diaminopimeloyl-D-alanyl-D-alanine + UMP. Its pathway is cell wall biogenesis; peptidoglycan biosynthesis. Its function is as follows. Catalyzes the initial step of the lipid cycle reactions in the biosynthesis of the cell wall peptidoglycan: transfers peptidoglycan precursor phospho-MurNAc-pentapeptide from UDP-MurNAc-pentapeptide onto the lipid carrier undecaprenyl phosphate, yielding undecaprenyl-pyrophosphoryl-MurNAc-pentapeptide, known as lipid I. In Symbiobacterium thermophilum (strain DSM 24528 / JCM 14929 / IAM 14863 / T), this protein is Phospho-N-acetylmuramoyl-pentapeptide-transferase.